The primary structure comprises 525 residues: UPF0288 protein MM_0912 (525 aa).

The protein belongs to the UPF0288 family.

This is UPF0288 protein MM_0912 from Methanosarcina mazei (strain ATCC BAA-159 / DSM 3647 / Goe1 / Go1 / JCM 11833 / OCM 88) (Methanosarcina frisia).